The primary structure comprises 100 residues: Aspartyl/glutamyl-tRNA(Asn/Gln) amidotransferase subunit C (100 aa).

Belongs to the GatC family. In terms of assembly, heterotrimer of A, B and C subunits.

The catalysed reaction is L-glutamyl-tRNA(Gln) + L-glutamine + ATP + H2O = L-glutaminyl-tRNA(Gln) + L-glutamate + ADP + phosphate + H(+). The enzyme catalyses L-aspartyl-tRNA(Asn) + L-glutamine + ATP + H2O = L-asparaginyl-tRNA(Asn) + L-glutamate + ADP + phosphate + 2 H(+). Functionally, allows the formation of correctly charged Asn-tRNA(Asn) or Gln-tRNA(Gln) through the transamidation of misacylated Asp-tRNA(Asn) or Glu-tRNA(Gln) in organisms which lack either or both of asparaginyl-tRNA or glutaminyl-tRNA synthetases. The reaction takes place in the presence of glutamine and ATP through an activated phospho-Asp-tRNA(Asn) or phospho-Glu-tRNA(Gln). The polypeptide is Aspartyl/glutamyl-tRNA(Asn/Gln) amidotransferase subunit C (Novosphingobium aromaticivorans (strain ATCC 700278 / DSM 12444 / CCUG 56034 / CIP 105152 / NBRC 16084 / F199)).